The chain runs to 114 residues: UPF0342 protein LSL_0473 (114 aa).

Belongs to the UPF0342 family.

In Ligilactobacillus salivarius (strain UCC118) (Lactobacillus salivarius), this protein is UPF0342 protein LSL_0473.